Consider the following 56-residue polypeptide: 4Fe-4S ferredoxin FdxA (56 aa).

4Fe-4S ferredoxin-type domains lie at 1-28 (MAYV…SSGD) and 29-56 (DRYV…PVQA). Residues C9, C12, C15, C19, C38, C41, C44, and C48 each contribute to the [4Fe-4S] cluster site.

It depends on [4Fe-4S] cluster as a cofactor.

Ferredoxins are iron-sulfur proteins that transfer electrons in a wide variety of metabolic reactions. The chain is 4Fe-4S ferredoxin FdxA from Gottschalkia acidurici (strain ATCC 7906 / DSM 604 / BCRC 14475 / CIP 104303 / KCTC 5404 / NCIMB 10678 / 9a) (Clostridium acidurici).